Consider the following 181-residue polypeptide: Probable inactive acireductone dioxygenase 2 (181 aa).

It belongs to the acireductone dioxygenase (ARD) family.

It localises to the cytoplasm. The protein resides in the nucleus. In terms of biological role, probable inactive acireductone dioxygenase. The polypeptide is Probable inactive acireductone dioxygenase 2 (Sorghum bicolor (Sorghum)).